Consider the following 811-residue polypeptide: Probable potassium transporter 16 (811 aa).

Residues 1–66 are Cytoplasmic-facing; sequence MAQQQAGARG…GQESWMRTLR (66 aa). A helical transmembrane segment spans residues 67–87; the sequence is LGFQCVGILHADLGTSPLYVY. The Extracellular portion of the chain corresponds to 88–100; that stretch reads QNTFKYGIKHEDD. Residues 101–121 form a helical membrane-spanning segment; that stretch reads IIGVLSLIIYSFVLFTMVKIV. Topologically, residues 122–190 are cytoplasmic; it reads FIALHANDDG…KSQLEKKPAK (69 aa). Residues 191-211 traverse the membrane as a helical segment; the sequence is IAVFFLTIFATALAISDCVLN. Residues 212 to 228 are Extracellular-facing; that stretch reads PSVSVLSAVNGLKLRAP. The chain crosses the membrane as a helical span at residues 229–249; sequence HLTTDEVVWITVGILVVFFAV. The Cytoplasmic segment spans residues 250–256; that stretch reads QRFGTDK. A helical transmembrane segment spans residues 257–277; sequence IGYTFAPVVVVWLLLISGIGI. At 278 to 310 the chain is on the extracellular side; it reads YDLVKYDVGVLRAFNPKYIIDYFRRNKKDGWVQ. The helical transmembrane segment at 311–331 threads the bilayer; it reads LGEVLLTFTGTEALFADLGYF. Residues 332 to 337 lie on the Cytoplasmic side of the membrane; sequence SIKSIQ. A helical transmembrane segment spans residues 338–358; sequence LSSTFVLLPSVLCTYIGQAAY. Topologically, residues 359–379 are extracellular; sequence LRKHMDQQHIQNAFFNSIPRP. A helical transmembrane segment spans residues 380–400; that stretch reads LFWPMFVLAIMTSVIGCQAMV. The Cytoplasmic portion of the chain corresponds to 401 to 438; that stretch reads SCAFATMSHLQTLNCFPRIKILHTSRRYSGQLYSPEVN. A helical transmembrane segment spans residues 439-459; it reads FFLCLLSCVITLSFRTTGFIV. Residues 460–463 are Extracellular-facing; it reads KAHE. The chain crosses the membrane as a helical span at residues 464-484; it reads ICVVLVMVITTILMTIVMLLV. At 485–488 the chain is on the cytoplasmic side; it reads WKVN. A helical membrane pass occupies residues 489-509; sequence IWWIVLFFVVFMSTETVYLSA. Topologically, residues 510 to 519 are extracellular; that stretch reads VLYKFTKGPY. A helical membrane pass occupies residues 520–540; it reads MPLAMSAVLMVIMFVWHYVHV. Residues 541–811 are Cytoplasmic-facing; sequence KRYKFELEHT…LLKVGITYEI (271 aa).

It belongs to the HAK/KUP transporter (TC 2.A.72.3) family.

It is found in the membrane. High-affinity potassium transporter. This Oryza sativa subsp. japonica (Rice) protein is Probable potassium transporter 16 (HAK16).